The sequence spans 704 residues: Polyribonucleotide nucleotidyltransferase (704 aa).

Aspartate 486 and aspartate 492 together coordinate Mg(2+). One can recognise a KH domain in the interval 553 to 612 (PRIYTMKINPEKIKDVIGKGGSVIRALTDETGTTIEIEDDGTIKIAATDGDKAKHAIRRI). The S1 motif domain maps to 622–690 (GRIYAGKVTR…RQGRIRLSIK (69 aa)).

This sequence belongs to the polyribonucleotide nucleotidyltransferase family. In terms of assembly, component of the RNA degradosome, which is a multiprotein complex involved in RNA processing and mRNA degradation. Mg(2+) serves as cofactor.

The protein resides in the cytoplasm. The enzyme catalyses RNA(n+1) + phosphate = RNA(n) + a ribonucleoside 5'-diphosphate. Involved in mRNA degradation. Catalyzes the phosphorolysis of single-stranded polyribonucleotides processively in the 3'- to 5'-direction. The polypeptide is Polyribonucleotide nucleotidyltransferase (Yersinia pseudotuberculosis serotype IB (strain PB1/+)).